A 154-amino-acid chain; its full sequence is 6,7-dimethyl-8-ribityllumazine synthase (154 aa).

Residues Trp23, 57–59 (AFE), and 81–83 (AVI) each bind 5-amino-6-(D-ribitylamino)uracil. A (2S)-2-hydroxy-3-oxobutyl phosphate-binding site is contributed by 86 to 87 (AT). The active-site Proton donor is the His89. Phe114 contacts 5-amino-6-(D-ribitylamino)uracil. Arg128 is a binding site for (2S)-2-hydroxy-3-oxobutyl phosphate.

It belongs to the DMRL synthase family.

The catalysed reaction is (2S)-2-hydroxy-3-oxobutyl phosphate + 5-amino-6-(D-ribitylamino)uracil = 6,7-dimethyl-8-(1-D-ribityl)lumazine + phosphate + 2 H2O + H(+). Its pathway is cofactor biosynthesis; riboflavin biosynthesis; riboflavin from 2-hydroxy-3-oxobutyl phosphate and 5-amino-6-(D-ribitylamino)uracil: step 1/2. Functionally, catalyzes the formation of 6,7-dimethyl-8-ribityllumazine by condensation of 5-amino-6-(D-ribitylamino)uracil with 3,4-dihydroxy-2-butanone 4-phosphate. This is the penultimate step in the biosynthesis of riboflavin. This chain is 6,7-dimethyl-8-ribityllumazine synthase, found in Sulfurimonas denitrificans (strain ATCC 33889 / DSM 1251) (Thiomicrospira denitrificans (strain ATCC 33889 / DSM 1251)).